Consider the following 325-residue polypeptide: MNLNKHSERKFDLITVGRACIDLNAVEYNRPMEETMTFSKYVGGSPANIAIGTAKLGLKVGFIGKISDDQHGRFIEKYMRDLNINTDGMVKDTAGRKVGLAFTEIKSPEECSILMYRENVADLYLTPEEISEDYIKETRVLLVSGTALAQSPSREAVLKAVHLAQKNDVIVAFELDYRPYTWKNTEETAVYYSLVAEQADVIIGTRDEFDMMENQIGGNNEMTIDNLFKHKAEIIVIKHGVEGSFAYTKAGETFRAQAYKTKVLKTFGAGDSYASAFLYGLFSGENIETALKFGSAAASIVVSKHSSSDAMPTADEIKALIANAD.

The protein belongs to the carbohydrate kinase PfkB family.

It catalyses the reaction 5-dehydro-2-deoxy-D-gluconate + ATP = 6-phospho-5-dehydro-2-deoxy-D-gluconate + ADP + H(+). The protein operates within polyol metabolism; myo-inositol degradation into acetyl-CoA; acetyl-CoA from myo-inositol: step 5/7. Functionally, catalyzes the phosphorylation of 5-dehydro-2-deoxy-D-gluconate (2-deoxy-5-keto-D-gluconate or DKG) to 6-phospho-5-dehydro-2-deoxy-D-gluconate (DKGP). This chain is 5-dehydro-2-deoxygluconokinase, found in Listeria innocua serovar 6a (strain ATCC BAA-680 / CLIP 11262).